Reading from the N-terminus, the 401-residue chain is Serine/threonine transporter SstT (401 aa).

A run of 8 helical transmembrane segments spans residues 17 to 37 (IGIGVVLGVLLGLIAPKITVI), 40 to 60 (FGSLFVGALKAIAPLLVLTLV), 78 to 98 (VICLYLFGTFAAAFIAVGASY), 138 to 158 (ALATANYIGVLTWAAVFGLAF), 179 to 199 (VVGWIIGLAPFGIMGLVFDTI), 212 to 232 (LLLLLLVGSMIFVALVVNPLI), 295 to 315 (MAGAAITINILTMAAVHTLGI), and 336 to 356 (ASGVAGGSLLLIPVACSLFGI).

It belongs to the dicarboxylate/amino acid:cation symporter (DAACS) (TC 2.A.23) family.

Its subcellular location is the cell membrane. It carries out the reaction L-serine(in) + Na(+)(in) = L-serine(out) + Na(+)(out). The catalysed reaction is L-threonine(in) + Na(+)(in) = L-threonine(out) + Na(+)(out). In terms of biological role, involved in the import of serine and threonine into the cell, with the concomitant import of sodium (symport system). This Streptococcus suis (strain 98HAH33) protein is Serine/threonine transporter SstT.